Here is a 567-residue protein sequence, read N- to C-terminus: Urease subunit alpha (567 aa).

The Urease domain maps to 129-567 (GGIDTHIHWI…LPMAQRYFLF (439 aa)). Residues histidine 134, histidine 136, and lysine 217 each contribute to the Ni(2+) site. Residue lysine 217 is modified to N6-carboxylysine. A substrate-binding site is contributed by histidine 219. Residues histidine 246 and histidine 272 each contribute to the Ni(2+) site. Catalysis depends on histidine 320, which acts as the Proton donor. Aspartate 360 provides a ligand contact to Ni(2+).

The protein belongs to the metallo-dependent hydrolases superfamily. Urease alpha subunit family. As to quaternary structure, heterotrimer of UreA (gamma), UreB (beta) and UreC (alpha) subunits. Three heterotrimers associate to form the active enzyme. Requires Ni cation as cofactor. Carboxylation allows a single lysine to coordinate two nickel ions.

Its subcellular location is the cytoplasm. The enzyme catalyses urea + 2 H2O + H(+) = hydrogencarbonate + 2 NH4(+). The protein operates within nitrogen metabolism; urea degradation; CO(2) and NH(3) from urea (urease route): step 1/1. This chain is Urease subunit alpha, found in Klebsiella pneumoniae (strain 342).